The primary structure comprises 46 residues: MPCLYICGECGAEHEIKPKEPVKCKDCTHRIMYKKRTDKMIQFEAR.

Residues C7, C10, C24, and C27 each contribute to the Zn(2+) site. The segment at 7–27 (CGECGAEHEIKPKEPVKCKDC) adopts a C4-type zinc-finger fold.

This sequence belongs to the archaeal Rpo12/eukaryotic RPC10 RNA polymerase subunit family. As to quaternary structure, component of the RNA polymerase I (Pol I), RNA polymerase II (Pol II) and RNA polymerase III (Pol III) complexes consisting of at least 13, 12 and 17 subunits, respectively.

Its subcellular location is the nucleus. In terms of biological role, DNA-dependent RNA polymerase catalyzes the transcription of DNA into RNA using the four ribonucleoside triphosphates as substrates. Common component of RNA polymerases I, II and III which synthesize ribosomal RNA precursors, mRNA precursors and many functional non-coding RNAs, and a small RNAs, such as 5S rRNA and tRNAs, respectively. The protein is DNA-directed RNA polymerases I, II, and III subunit rpabc4 (polr2k) of Dictyostelium discoideum (Social amoeba).